The primary structure comprises 62 residues: Pelophylaxin-4 (62 aa).

A signal peptide spans 1–22; that stretch reads MLTLKKSMLLIFFLGTINFSLC. Positions 23 to 45 are excised as a propeptide; it reads EQERNADEEERRDEPEERDVEVQ. Leucine 60 is subject to Leucine amide. Glycine 61 is a propeptide.

Expressed by the skin glands.

It is found in the secreted. In terms of biological role, antimicrobial peptide. In Pelophylax fukienensis (Fukien gold-striped pond frog), this protein is Pelophylaxin-4.